Here is a 105-residue protein sequence, read N- to C-terminus: UPF0145 protein AHA_2580 (105 aa).

The protein belongs to the UPF0145 family.

This chain is UPF0145 protein AHA_2580, found in Aeromonas hydrophila subsp. hydrophila (strain ATCC 7966 / DSM 30187 / BCRC 13018 / CCUG 14551 / JCM 1027 / KCTC 2358 / NCIMB 9240 / NCTC 8049).